Reading from the N-terminus, the 82-residue chain is Small ribosomal subunit protein bS16 (82 aa).

It belongs to the bacterial ribosomal protein bS16 family.

This chain is Small ribosomal subunit protein bS16, found in Blochmanniella floridana.